Reading from the N-terminus, the 168-residue chain is uncharacterized protein (168 aa).

The N-terminal 29 residues, 1–29, are a transit peptide targeting the mitochondrion; the sequence is MGWRFPSPSPRQASPVAPLLAAPTAVRSC. Residues 98–110 are compositionally biased toward basic and acidic residues; the sequence is GETKARRAREEGK. The disordered stretch occupies residues 98–152; that stretch reads GETKARRAREEGKLPSLGNAPAPRRRSVAWPAAEGSCAAPESSPPASEASLPAPE. Over residues 128–152 the composition is skewed to low complexity; sequence PAAEGSCAAPESSPPASEASLPAPE.

The protein localises to the mitochondrion. This is an uncharacterized protein from Homo sapiens (Human).